A 413-amino-acid chain; its full sequence is Divalent metal cation transporter MntH (413 aa).

Helical transmembrane passes span Leu-19–Ala-39, Ala-46–Ile-66, Val-94–Ile-114, Leu-122–Ile-142, Val-156–Gln-176, Ala-196–His-216, Ile-241–Phe-261, Ile-290–Gly-310, Ala-329–Leu-349, Val-350–Phe-370, and Val-392–Val-412.

This sequence belongs to the NRAMP family.

Its subcellular location is the cell inner membrane. Its function is as follows. H(+)-stimulated, divalent metal cation uptake system. The protein is Divalent metal cation transporter MntH of Klebsiella pneumoniae (strain 342).